The sequence spans 506 residues: Protein EFFECTOR OF TRANSCRIPTION 1 (506 aa).

The region spanning 185 to 225 (AFQGLYELSHDHGRKDDVLVANLGQPESIRSRLRSYSRSFA) is the GIY-YIG domain. Polar residues predominate over residues 234–247 (LSQTILPTTQNKSD). The segment at 234–298 (LSQTILPTTQ…VSEKHDDIVD (65 aa)) is disordered. The segment covering 248-272 (NQTEEKKSDSEEEREVSSDAAEKES) has biased composition (basic and acidic residues). The segment covering 273 to 288 (NSLPSILRLSRSRPQP) has biased composition (low complexity). Cx9Cx9RCx2HK repeat units follow at residues 306–331 (CGVL…TEHK) and 361–386 (CGVI…EDHK). A compositionally biased stretch (basic and acidic residues) spans 404-413 (KAVNEDKSKP). The tract at residues 404–426 (KAVNEDKSKPETSTGMNQEGSGL) is disordered. The span at 414-423 (ETSTGMNQEG) shows a compositional bias: polar residues. Cx9Cx9RCx2HK repeat units follow at residues 428 to 453 (CEAT…WQHK) and 475 to 500 (CGFK…EEHK).

As to expression, expressed in rosette leaves, stipules, stems, flowers, siliques and mature seeds. Expressed in the vascular bundles of xylem in shoot parenchyma cells. Expressed in the remnant cytoplasm of differentiated fiber cells and in protoxylem element of parenchymal cells.

The protein resides in the cytoplasm. It localises to the nucleus. Functionally, transcriptional regulator involved in the regulation of cell differentiation in meristems. Binds DNA without sequence preference. In Arabidopsis thaliana (Mouse-ear cress), this protein is Protein EFFECTOR OF TRANSCRIPTION 1.